We begin with the raw amino-acid sequence, 397 residues long: Serpin-Z7 (397 aa).

Ala-2 is subject to N-acetylalanine. The RCL stretch occupies residues 344–368; it reads GTKAGAATGDVIVDRSLPIRMDFVA.

Belongs to the serpin family. As to expression, highly expressed in endosperm, at intermediate level in embryo and at lower levels in roots.

Inhibits chymotrypsin in vitro. This is Serpin-Z7 (PAZ7) from Hordeum vulgare (Barley).